Consider the following 318-residue polypeptide: Transaldolase (318 aa).

The active-site Schiff-base intermediate with substrate is the Lys132.

The protein belongs to the transaldolase family. Type 1 subfamily. In terms of assembly, homodimer.

Its subcellular location is the cytoplasm. The catalysed reaction is D-sedoheptulose 7-phosphate + D-glyceraldehyde 3-phosphate = D-erythrose 4-phosphate + beta-D-fructose 6-phosphate. Its pathway is carbohydrate degradation; pentose phosphate pathway; D-glyceraldehyde 3-phosphate and beta-D-fructose 6-phosphate from D-ribose 5-phosphate and D-xylulose 5-phosphate (non-oxidative stage): step 2/3. Functionally, transaldolase is important for the balance of metabolites in the pentose-phosphate pathway. The chain is Transaldolase from Shewanella pealeana (strain ATCC 700345 / ANG-SQ1).